The primary structure comprises 181 residues: Large ribosomal subunit protein uL5 (181 aa).

This sequence belongs to the universal ribosomal protein uL5 family. In terms of assembly, part of the 50S ribosomal subunit; part of the 5S rRNA/L5/L18/L25 subcomplex. Contacts the 5S rRNA and the P site tRNA. Forms a bridge to the 30S subunit in the 70S ribosome.

Functionally, this is one of the proteins that bind and probably mediate the attachment of the 5S RNA into the large ribosomal subunit, where it forms part of the central protuberance. In the 70S ribosome it contacts protein S13 of the 30S subunit (bridge B1b), connecting the 2 subunits; this bridge is implicated in subunit movement. Contacts the P site tRNA; the 5S rRNA and some of its associated proteins might help stabilize positioning of ribosome-bound tRNAs. The polypeptide is Large ribosomal subunit protein uL5 (Baumannia cicadellinicola subsp. Homalodisca coagulata).